A 61-amino-acid chain; its full sequence is Large ribosomal subunit protein uL30 (61 aa).

The protein belongs to the universal ribosomal protein uL30 family. Part of the 50S ribosomal subunit.

This is Large ribosomal subunit protein uL30 from Parafrankia sp. (strain EAN1pec).